Reading from the N-terminus, the 448-residue chain is UPF0053 protein sll0260 (448 aa).

Residues 2–203 (FSSSVELELF…AQAGMIDEAE (202 aa)) form the CNNM transmembrane domain. Helical transmembrane passes span 11–31 (FFIFVLVVLNGIFSGSEIAIV), 62–82 (FLSAVQIGITLIGILTGAVGG), 106–126 (LSISLLVGFITYLSLVVGELV), and 142–162 (VAPAMHLVAQLTAPLVYLLGV). 2 consecutive CBS domains span residues 222–281 (MTPR…GQKI) and 286–345 (IVQP…NDDE).

The protein belongs to the UPF0053 family.

The protein localises to the cell membrane. This Synechocystis sp. (strain ATCC 27184 / PCC 6803 / Kazusa) protein is UPF0053 protein sll0260.